Reading from the N-terminus, the 220-residue chain is SAGA-associated factor 11 homolog (220 aa).

A disordered region spans residues 1–38 (MSTGTANSAVSSKSTNSTTSTSKVPVNEKSNNSQNANT). Residues 126 to 147 (CTCPNCDRPVSAARFAPHLEKC) form an SGF11-type zinc finger. 2 stretches are compositionally biased toward low complexity: residues 160–177 (RRLA…SSSS) and 204–220 (SQNS…GKTF). The disordered stretch occupies residues 160–220 (RRLATKESNS…GSKKNNGKTF (61 aa)).

The protein belongs to the SGF11 family. Component of some SAGA transcription coactivator-HAT complexes. Within the SAGA complex, participates in a subcomplex of SAGA called the DUB module (deubiquitination module).

The protein localises to the nucleus. Component of the transcription regulatory histone acetylation (HAT) complex SAGA, a multiprotein complex that activates transcription by remodeling chromatin and mediating histone acetylation and deubiquitination. Within the SAGA complex, participates in a subcomplex that specifically deubiquitinates histone H2B. The SAGA complex is recruited to specific gene promoters by activators, where it is required for transcription. This is SAGA-associated factor 11 homolog from Musca domestica (House fly).